A 289-amino-acid polypeptide reads, in one-letter code: Putative transmembrane protein ORF289 (289 aa).

Residues 1-152 (MAIAKEFLLT…QYTSVVTFRT (152 aa)) lie on the Extracellular side of the membrane. A helical membrane pass occupies residues 153–173 (LVAPILYFFALFLVPAWSTVL). At 174–234 (KQNPTFPQSQ…NGEVTSTQVN (61 aa)) the chain is on the cytoplasmic side. A helical membrane pass occupies residues 235 to 255 (APIFIGVTTPSGVLVLAYNYY). The Extracellular segment spans residues 256-289 (SGTISKYVSLTVTTTYGSATVINQFETKTTGGTT).

It is found in the host membrane. This chain is Putative transmembrane protein ORF289, found in Acidianus sp. F28 (AFV-2).